We begin with the raw amino-acid sequence, 938 residues long: Isoleucine--tRNA ligase (938 aa).

A 'HIGH' region motif is present at residues 58–68; it reads PYANGNIHMGH. Glu-566 provides a ligand contact to L-isoleucyl-5'-AMP. The 'KMSKS' region signature appears at 607–611; sequence KMSKS. Lys-610 lines the ATP pocket. Zn(2+)-binding residues include Cys-906, Cys-909, Cys-926, and Cys-929.

This sequence belongs to the class-I aminoacyl-tRNA synthetase family. IleS type 1 subfamily. In terms of assembly, monomer. The cofactor is Zn(2+).

It localises to the cytoplasm. The catalysed reaction is tRNA(Ile) + L-isoleucine + ATP = L-isoleucyl-tRNA(Ile) + AMP + diphosphate. In terms of biological role, catalyzes the attachment of isoleucine to tRNA(Ile). As IleRS can inadvertently accommodate and process structurally similar amino acids such as valine, to avoid such errors it has two additional distinct tRNA(Ile)-dependent editing activities. One activity is designated as 'pretransfer' editing and involves the hydrolysis of activated Val-AMP. The other activity is designated 'posttransfer' editing and involves deacylation of mischarged Val-tRNA(Ile). The chain is Isoleucine--tRNA ligase from Nitratidesulfovibrio vulgaris (strain ATCC 29579 / DSM 644 / CCUG 34227 / NCIMB 8303 / VKM B-1760 / Hildenborough) (Desulfovibrio vulgaris).